A 327-amino-acid chain; its full sequence is Sphingomyelinase D (327 aa).

The first 23 residues, 1-23 (MQPLTRTICALFCLLLTLPLTFG), serve as a signal peptide directing secretion. Residue H52 is part of the active site. Residues E72, D74, and D117 each coordinate Mg(2+). The SMD-tail motif lies at 320 to 327 (VTGADKLW).

This sequence belongs to the sphingomyelinase D/phospholipase D family. It depends on Mg(2+) as a cofactor.

It localises to the secreted. It catalyses the reaction a sphingomyelin + H2O = an N-acylsphing-4-enine 1-phosphate + choline + H(+). In terms of biological role, catalyzes the hydrolysis of sphingomyelin. Sphingomyelinases D are produced by some spider in their venoms, but also by arthropods such as ticks, or pathogenic bacteria and fungi. They might play a role in pathogenicity through different mechanisms, such as membrane destabilization and host cell penetration, but also pulmonary inflammation and cutaneous lesions. The polypeptide is Sphingomyelinase D (Paracoccidioides brasiliensis (strain Pb03)).